We begin with the raw amino-acid sequence, 669 residues long: Putative transcription factor SOX-14 (669 aa).

Positions 1 to 12 are enriched in polar residues; the sequence is MIAKPNQATTEP. Disordered stretches follow at residues 1–149, 254–336, and 419–439; these read MIAK…EMTL, YKYR…PKYE, and SSLT…MDNI. Residues 17 to 37 are compositionally biased toward low complexity; the sequence is RPGTVPTVPATTPARPATITI. Over residues 52-71 the composition is skewed to pro residues; sequence TLPPFSPSPSPASSPSPAPA. Over residues 75-84 the composition is skewed to polar residues; sequence GAQKTQSQAA. The segment covering 88–105 has biased composition (low complexity); sequence PAAVASPSAPVAAAAPKT. A compositionally biased stretch (basic and acidic residues) spans 130–145; the sequence is RESEMDGERSPSHSGH. The segment at residues 187-255 is a DNA-binding region (HMG box); that stretch reads IKRPMNAFMV…LHMIEYPNYK (69 aa). Low complexity predominate over residues 284–294; sequence TTNNNNSLTTL. Residues 295 to 318 are compositionally biased toward polar residues; it reads AINGTTTAGRKSKRSTSTCQSGSA. The span at 322–336 shows a compositional bias: basic and acidic residues; it reads LRNDSGDTSSKPKYE. The segment covering 419–431 has biased composition (polar residues); it reads SSLTQSQHNQSDP.

It localises to the nucleus. The polypeptide is Putative transcription factor SOX-14 (Sox14) (Drosophila melanogaster (Fruit fly)).